Reading from the N-terminus, the 477-residue chain is Glycogen synthase (477 aa).

Residue K15 participates in ADP-alpha-D-glucose binding.

It belongs to the glycosyltransferase 1 family. Bacterial/plant glycogen synthase subfamily.

It catalyses the reaction [(1-&gt;4)-alpha-D-glucosyl](n) + ADP-alpha-D-glucose = [(1-&gt;4)-alpha-D-glucosyl](n+1) + ADP + H(+). Its pathway is glycan biosynthesis; glycogen biosynthesis. Its function is as follows. Synthesizes alpha-1,4-glucan chains using ADP-glucose. The sequence is that of Glycogen synthase from Shigella dysenteriae serotype 1 (strain Sd197).